The following is a 438-amino-acid chain: Aflatoxin cluster transcriptional coactivator aflS (438 aa).

An HTH iclR-type domain is found at 65-134 (LALYNQLLAC…PSPGHVAHSV (70 aa)). A DNA-binding region (H-T-H motif) is located at residues 95-114 (FEDVADIAGVPECRLRRLVR).

In terms of assembly, interacts with aflR.

The protein localises to the nucleus. Its subcellular location is the endosome. Transcription coactivator involved in regulation of the aflatoxin biosynthesis gene cluster with aflR. The ratio of the expression data between aflS:aflR plays a crucial role in the regulation of aflatoxins production. A high ratio, produced at a range between 17 and 30 degrees Celsius, corresponds with the production profile of aflatoxin G1 biosynthesis. A low ratio, produced over 30 degrees Celsius, is related to aflatoxin B1 biosynthesis. AflJ may act in aflR transport to or from the nucleus, thus controlling the availability of aflR for transcriptional activation of aflatoxin biosynthesis cluster genes. AflJ may also assist in directing endosomes to the cytoplasmic membrane for aflatoxin export. The protein is Aflatoxin cluster transcriptional coactivator aflS of Aspergillus parasiticus (strain ATCC 56775 / NRRL 5862 / SRRC 143 / SU-1).